Reading from the N-terminus, the 460-residue chain is Argininosuccinate lyase (460 aa).

This sequence belongs to the lyase 1 family. Argininosuccinate lyase subfamily.

The protein localises to the cytoplasm. It catalyses the reaction 2-(N(omega)-L-arginino)succinate = fumarate + L-arginine. It participates in amino-acid biosynthesis; L-arginine biosynthesis; L-arginine from L-ornithine and carbamoyl phosphate: step 3/3. This Sulfurimonas denitrificans (strain ATCC 33889 / DSM 1251) (Thiomicrospira denitrificans (strain ATCC 33889 / DSM 1251)) protein is Argininosuccinate lyase.